Here is a 255-residue protein sequence, read N- to C-terminus: Hydroxyacylglutathione hydrolase (255 aa).

Zn(2+) contacts are provided by His-56, His-58, Asp-60, His-61, His-114, Asp-133, and His-171.

It belongs to the metallo-beta-lactamase superfamily. Glyoxalase II family. Monomer. The cofactor is Zn(2+).

The enzyme catalyses an S-(2-hydroxyacyl)glutathione + H2O = a 2-hydroxy carboxylate + glutathione + H(+). It participates in secondary metabolite metabolism; methylglyoxal degradation; (R)-lactate from methylglyoxal: step 2/2. Thiolesterase that catalyzes the hydrolysis of S-D-lactoyl-glutathione to form glutathione and D-lactic acid. This Mesorhizobium japonicum (strain LMG 29417 / CECT 9101 / MAFF 303099) (Mesorhizobium loti (strain MAFF 303099)) protein is Hydroxyacylglutathione hydrolase.